The chain runs to 501 residues: Glutamate--tRNA ligase (501 aa).

The 'HIGH' region motif lies at 11–21 (PSPTGALHIGG). The 'KMSKS' region signature appears at 260–264 (KLSKR). An ATP-binding site is contributed by K263.

Belongs to the class-I aminoacyl-tRNA synthetase family. Glutamate--tRNA ligase type 1 subfamily. Monomer.

It localises to the cytoplasm. The enzyme catalyses tRNA(Glu) + L-glutamate + ATP = L-glutamyl-tRNA(Glu) + AMP + diphosphate. Catalyzes the attachment of glutamate to tRNA(Glu) in a two-step reaction: glutamate is first activated by ATP to form Glu-AMP and then transferred to the acceptor end of tRNA(Glu). This is Glutamate--tRNA ligase from Flavobacterium psychrophilum (strain ATCC 49511 / DSM 21280 / CIP 103535 / JIP02/86).